The chain runs to 821 residues: Frameshifted structural polyprotein (821 aa).

A disordered region spans residues 1–106; that stretch reads MNRGFFNMLG…KPKPGKRQRM (106 aa). Polar residues predominate over residues 38–49; that stretch reads LASQIQQLTTAV. Residues 67–106 show a composition bias toward basic residues; that stretch reads PPPRQKKQAPKQPPKPKKPKTQEKKKKQPAKPKPGKRQRM. Residues 93-101 are ribosome-binding; sequence KQPAKPKPG. Positions 114–264 constitute a Peptidase S3 domain; that stretch reads RLFDVKNEDG…KTTPEGTEEW (151 aa). Catalysis depends on charge relay system residues histidine 141, aspartate 163, and serine 215. The tract at residues 265-279 is functions as an uncleaved signal peptide for the precursor of protein E3/E2; that stretch reads SAAPLVTAMCLLGNV. Asparagine 278 is a glycosylation site (N-linked (GlcNAc...) asparagine; by host). A disulfide bond links cysteine 283 and cysteine 289. N-linked (GlcNAc...) asparagine; by host glycans are attached at residues asparagine 524 and asparagine 646. A helical membrane pass occupies residues 696–716; sequence ILAVASATVAMMIGVTVAVLC. Residues cysteine 724, cysteine 744, and cysteine 745 are each lipidated (S-palmitoyl cysteine; by host). 2 helical membrane-spanning segments follow: residues 726-746 and 764-784; these read TPYA…LCCV and NSQP…IVLM.

Belongs to the alphavirus frameshifted structural polyprotein family. In terms of assembly, homomultimer. Interacts with host karyopherin KPNA4; this interaction allows the nuclear import of the viral capsid protein. Interacts with spike glycoprotein E2. Interacts with host IRAK1; the interaction leads to inhibition of IRAK1-dependent signaling. As to quaternary structure, the precursor of protein E3/E2 and E1 form a heterodimer shortly after synthesis. Processing of the precursor of protein E3/E2 into E2 and E3 results in a heterodimer of the spike glycoproteins E2 and E1. Spike at virion surface are constituted of three E2-E1 heterodimers. Post-translationally, specific enzymatic cleavages in vivo yield mature proteins. Capsid protein is auto-cleaved during polyprotein translation, unmasking a signal peptide at the N-terminus of the precursor of E3/E2. The remaining polyprotein is then targeted to the host endoplasmic reticulum, where host signal peptidase cleaves it into pE2 and TF. pE2 is further processed to mature E3 and E2 by host furin in trans-Golgi vesicle. In terms of processing, palmitoylated via thioester bonds. These palmitoylations may induce disruption of the C-terminus transmembrane. This would result in the reorientation of E2 C-terminus from lumenal to cytoplasmic side. Palmitoylated via thioester bonds.

Its subcellular location is the virion. The protein resides in the host cytoplasm. It localises to the host cell membrane. It is found in the host nucleus. The protein localises to the virion membrane. It carries out the reaction Autocatalytic release of the core protein from the N-terminus of the togavirus structural polyprotein by hydrolysis of a -Trp-|-Ser- bond.. In terms of biological role, forms an icosahedral capsid with a T=4 symmetry composed of 240 copies of the capsid protein surrounded by a lipid membrane through which penetrate 80 spikes composed of trimers of E1-E2 heterodimers. The capsid protein binds to the viral RNA genome at a site adjacent to a ribosome binding site for viral genome translation following genome release. Possesses a protease activity that results in its autocatalytic cleavage from the nascent structural protein. Following its self-cleavage, the capsid protein transiently associates with ribosomes, and within several minutes the protein binds to viral RNA and rapidly assembles into icosahedric core particles. The resulting nucleocapsid eventually associates with the cytoplasmic domain of the spike glycoprotein E2 at the cell membrane, leading to budding and formation of mature virions. In case of infection, new virions attach to target cells and after clathrin-mediated endocytosis their membrane fuses with the host endosomal membrane. This leads to the release of the nucleocapsid into the cytoplasm, followed by an uncoating event necessary for the genomic RNA to become accessible. The uncoating might be triggered by the interaction of capsid proteins with ribosomes. Binding of ribosomes would release the genomic RNA since the same region is genomic RNA-binding and ribosome-binding. Specifically inhibits interleukin-1 receptor-associated kinase 1/IRAK1-dependent signaling during viral entry, representing a means by which the alphaviruses may evade innate immune detection and activation prior to viral gene expression. Provides the signal sequence for the translocation of the precursor of protein E3/E2 to the host endoplasmic reticulum. Furin-cleaved E3 remains associated with spike glycoprotein E1 and mediates pH protection of the latter during the transport via the secretory pathway. After virion release from the host cell, the assembly protein E3 is gradually released in the extracellular space. Functionally, plays an essential role in viral attachment to target host cell, by binding to the cell receptor. Synthesized as a pE2 precursor which is processed by furin at the cell membrane just before virion budding, giving rise to E2-E1 heterodimer. The pE2-E1 heterodimer is stable, whereas E2-E1 is unstable and dissociate at low pH. pE2 is processed at the last step, presumably to avoid E1 fusion activation before its final export to cell surface. E2 C-terminus contains a transitory transmembrane that would be disrupted by palmitoylation, resulting in reorientation of the C-terminal tail from lumenal to cytoplasmic side. This step is critical since E2 C-terminus is involved in budding by interacting with capsid proteins. This release of E2 C-terminus in cytoplasm occurs lately in protein export, and precludes premature assembly of particles at the endoplasmic reticulum membrane. Its function is as follows. Plays a role in viral assembly and release. The sequence is that of Frameshifted structural polyprotein from Sindbis virus (SINV).